A 948-amino-acid chain; its full sequence is Protocadherin alpha-2 (948 aa).

The signal sequence occupies residues Met1–Ala22. Residues Ala23–Asn697 lie on the Extracellular side of the membrane. Cadherin domains lie at Gln30–Phe133, Ala157–Phe242, Ala243–Val350, Ser351–Phe455, Ala456–Leu565, and Gly588–Ala678. Asn257, Asn265, Asn362, and Asn548 each carry an N-linked (GlcNAc...) asparagine glycan. Residues Val698 to Tyr718 form a helical membrane-spanning segment. Residues Thr719–Gln948 lie on the Cytoplasmic side of the membrane. One copy of the PXXP 1 repeat lies at Pro734–Pro737. Positions Pro734–Pro892 are 5 X 4 AA repeats of P-X-X-P. 3 disordered regions span residues Arg755–Asn801, Gly829–Pro854, and Lys868–Gln948. The segment covering Ala783 to Gly795 has biased composition (basic and acidic residues). PXXP repeat units lie at residues Pro797–Pro800, Pro830–Pro833, Pro871–Pro874, and Pro889–Pro892. The span at Asp907–Lys921 shows a compositional bias: basic and acidic residues.

The protein localises to the cell membrane. In terms of biological role, potential calcium-dependent cell-adhesion protein. May be involved in the establishment and maintenance of specific neuronal connections in the brain. The sequence is that of Protocadherin alpha-2 (PCDHA2) from Pan troglodytes (Chimpanzee).